Reading from the N-terminus, the 264-residue chain is 3-methyl-2-oxobutanoate hydroxymethyltransferase (264 aa).

The Mg(2+) site is built by Asp45 and Asp84. 3-methyl-2-oxobutanoate-binding positions include 45-46, Asp84, and Lys112; that span reads DS. Glu114 is a Mg(2+) binding site. The active-site Proton acceptor is Glu181.

The protein belongs to the PanB family. In terms of assembly, homodecamer; pentamer of dimers. The cofactor is Mg(2+).

The protein resides in the cytoplasm. It catalyses the reaction 3-methyl-2-oxobutanoate + (6R)-5,10-methylene-5,6,7,8-tetrahydrofolate + H2O = 2-dehydropantoate + (6S)-5,6,7,8-tetrahydrofolate. It participates in cofactor biosynthesis; (R)-pantothenate biosynthesis; (R)-pantoate from 3-methyl-2-oxobutanoate: step 1/2. Catalyzes the reversible reaction in which hydroxymethyl group from 5,10-methylenetetrahydrofolate is transferred onto alpha-ketoisovalerate to form ketopantoate. This Escherichia coli O8 (strain IAI1) protein is 3-methyl-2-oxobutanoate hydroxymethyltransferase.